The sequence spans 204 residues: Pyridoxamine 5'-phosphate oxidase YLR456W homolog (204 aa).

FMN is bound by residues 65 to 66 and N127; that span reads FT.

This sequence belongs to the pyridoxamine 5'-phosphate oxidase family. FMN is required as a cofactor.

It is found in the cytoplasm. The protein localises to the nucleus. The protein is Pyridoxamine 5'-phosphate oxidase YLR456W homolog of Saccharomyces cerevisiae (strain ATCC 204508 / S288c) (Baker's yeast).